The primary structure comprises 384 residues: S-adenosylmethionine synthase (384 aa).

Histidine 15 is an ATP binding site. Mg(2+) is bound at residue aspartate 17. Residue glutamate 43 participates in K(+) binding. L-methionine-binding residues include glutamate 56 and glutamine 99. The interval 99 to 109 (QSPDINQGVDR) is flexible loop. Residues 164 to 166 (DAK), 231 to 232 (RF), aspartate 240, 246 to 247 (RK), alanine 263, and lysine 267 contribute to the ATP site. Residue aspartate 240 participates in L-methionine binding. Lysine 271 provides a ligand contact to L-methionine.

It belongs to the AdoMet synthase family. As to quaternary structure, homotetramer; dimer of dimers. Mg(2+) serves as cofactor. K(+) is required as a cofactor.

It is found in the cytoplasm. The catalysed reaction is L-methionine + ATP + H2O = S-adenosyl-L-methionine + phosphate + diphosphate. It functions in the pathway amino-acid biosynthesis; S-adenosyl-L-methionine biosynthesis; S-adenosyl-L-methionine from L-methionine: step 1/1. Catalyzes the formation of S-adenosylmethionine (AdoMet) from methionine and ATP. The overall synthetic reaction is composed of two sequential steps, AdoMet formation and the subsequent tripolyphosphate hydrolysis which occurs prior to release of AdoMet from the enzyme. The polypeptide is S-adenosylmethionine synthase (Shewanella pealeana (strain ATCC 700345 / ANG-SQ1)).